A 255-amino-acid polypeptide reads, in one-letter code: Small ribosomal subunit protein uS2 (255 aa).

The protein belongs to the universal ribosomal protein uS2 family.

The protein is Small ribosomal subunit protein uS2 of Streptococcus pyogenes serotype M49 (strain NZ131).